The sequence spans 208 residues: 2-dehydro-3-deoxy-phosphogluconate aldolase (208 aa).

E41 functions as the Proton acceptor in the catalytic mechanism. Residues R45, T68, and K128 each coordinate pyruvate. K128 acts as the Schiff-base intermediate with substrate in catalysis.

This sequence belongs to the KHG/KDPG aldolase family. As to quaternary structure, homotrimer.

Its subcellular location is the cytoplasm. It carries out the reaction 2-dehydro-3-deoxy-6-phospho-D-gluconate = D-glyceraldehyde 3-phosphate + pyruvate. The protein operates within carbohydrate acid metabolism; 2-dehydro-3-deoxy-D-gluconate degradation; D-glyceraldehyde 3-phosphate and pyruvate from 2-dehydro-3-deoxy-D-gluconate: step 2/2. Involved in the degradation of glucose via the Entner-Doudoroff pathway. Catalyzes the reversible, stereospecific retro-aldol cleavage of 2-keto-3-deoxy-6-phosphogluconate (KDPG) to pyruvate and D-glyceraldehyde-3-phosphate. This Zymomonas mobilis subsp. mobilis (strain ATCC 31821 / ZM4 / CP4) protein is 2-dehydro-3-deoxy-phosphogluconate aldolase.